We begin with the raw amino-acid sequence, 338 residues long: Probable protein S-acyltransferase 1 (338 aa).

Transmembrane regions (helical) follow at residues 32–52 (DASS…AFSI) and 68–88 (LTLI…FLTS). The DHHC domain occupies 142–192 (KFCDTCQLYRPPRAFHCSICNNCVQRFDHHCPWVGQCIALRNYPFFVCFLS). Catalysis depends on C172, which acts as the S-palmitoyl cysteine intermediate. 2 helical membrane-spanning segments follow: residues 186–206 (FFVC…VFSW) and 225–245 (ILGV…GLTV). Residues 319-338 (FGPKDTKMSSGKSDSEARER) are disordered. Residues 320 to 338 (GPKDTKMSSGKSDSEARER) show a composition bias toward basic and acidic residues.

Belongs to the DHHC palmitoyltransferase family.

The protein resides in the endosome membrane. The enzyme catalyses L-cysteinyl-[protein] + hexadecanoyl-CoA = S-hexadecanoyl-L-cysteinyl-[protein] + CoA. Palmitoyl acyltransferase. The sequence is that of Probable protein S-acyltransferase 1 (PAT01) from Arabidopsis thaliana (Mouse-ear cress).